A 240-amino-acid chain; its full sequence is 4-hydroxy-tetrahydrodipicolinate reductase (240 aa).

NAD(+) is bound by residues 79 to 81 and 103 to 106; these read ATT and SANM. His135 acts as the Proton donor/acceptor in catalysis. A (S)-2,3,4,5-tetrahydrodipicolinate-binding site is contributed by His136. Lys139 acts as the Proton donor in catalysis. Residue 145-146 coordinates (S)-2,3,4,5-tetrahydrodipicolinate; it reads GT.

It belongs to the DapB family.

The protein localises to the cytoplasm. The catalysed reaction is (S)-2,3,4,5-tetrahydrodipicolinate + NAD(+) + H2O = (2S,4S)-4-hydroxy-2,3,4,5-tetrahydrodipicolinate + NADH + H(+). It carries out the reaction (S)-2,3,4,5-tetrahydrodipicolinate + NADP(+) + H2O = (2S,4S)-4-hydroxy-2,3,4,5-tetrahydrodipicolinate + NADPH + H(+). It participates in amino-acid biosynthesis; L-lysine biosynthesis via DAP pathway; (S)-tetrahydrodipicolinate from L-aspartate: step 4/4. In terms of biological role, catalyzes the conversion of 4-hydroxy-tetrahydrodipicolinate (HTPA) to tetrahydrodipicolinate. The polypeptide is 4-hydroxy-tetrahydrodipicolinate reductase (Staphylococcus aureus (strain MSSA476)).